A 290-amino-acid polypeptide reads, in one-letter code: Porphobilinogen deaminase (290 aa).

Cys237 carries the S-(dipyrrolylmethanemethyl)cysteine modification.

The protein belongs to the HMBS family. Monomer. Requires dipyrromethane as cofactor.

It carries out the reaction 4 porphobilinogen + H2O = hydroxymethylbilane + 4 NH4(+). It functions in the pathway porphyrin-containing compound metabolism; protoporphyrin-IX biosynthesis; coproporphyrinogen-III from 5-aminolevulinate: step 2/4. Functionally, tetrapolymerization of the monopyrrole PBG into the hydroxymethylbilane pre-uroporphyrinogen in several discrete steps. The chain is Porphobilinogen deaminase from Clostridium botulinum (strain Loch Maree / Type A3).